The chain runs to 498 residues: MIELRNLSYTYGTAEEPSLKNINLKVKKGELLLVTGHSAAGKTTLALAMAGILHHEIGGKIEGNLSFKNRDIKEFDGIKELSRHTGMVFDDAESQLIFTTVEEEILSGLENRGYSGKEIQRRLNEVMELCEIGHLKERAPHTLSGGQKQKVALAATLALDTEVLILDEATAELDTEAVRKVFSVLKRLKEAEKTIIIVDHNIEDFLEIGDRVVLLEKGEIKAIKSPADFAAVSEDTDLTSKSSKKEYSCSQKERQPVISIKNLTQRYGEFNALDNLDLEIRSGELVAILGENGSGKTTLVKHLNGLLRPYSGNVSVKGLNTSLTPVNELVKHTGLVFQNPDNMLFEDTVEAEVAFGLNNIGITGSEAGDAIARSLELVNLKGKEKVFPRHLSRGERQRLAVACVIAMRPELIILDEPTTGLDAEESDRMMQLMKRLQLEGHTILMVTHNMQIVKDHAERVIRMASGKIVEDSANGACNSFKRNIKCVEEKCAEGGAIV.

2 consecutive ABC transporter domains span residues 2–242 (IELR…TSKS) and 258–490 (ISIK…VEEK). Residues 36–43 (GHSAAGKT) and 290–297 (GENGSGKT) contribute to the ATP site.

This sequence belongs to the ABC transporter superfamily.

It localises to the cell membrane. Its function is as follows. Probably part of an ABC transporter complex. Responsible for energy coupling to the transport system. The polypeptide is Putative ABC transporter ATP-binding protein MM_2387 (Methanosarcina mazei (strain ATCC BAA-159 / DSM 3647 / Goe1 / Go1 / JCM 11833 / OCM 88) (Methanosarcina frisia)).